The sequence spans 461 residues: MLYDDTIAAIATPPGEGGIGIVRISGRDALKILERIFVPVRPGRWKPYQMRYGRVVDQNGAVVDEALAVFMRGPRSFTAEDTAEISVHGGPLVVERVLQQALAAGARAAAPGEFTMRAFLNGRIDLAQAEATLDIITARTTTALALAEAQLGGWLSQELHRIRDLLMDPLAYCTALVDFPEDEVDPQDIETPLTAAVQALDALVASAQHGIIYRQGARAALIGRPNAGKSSLLNALLRVDRAIVTPIPGTTRDTLEETASLGGVPVVLTDTAGIVESDDPVERLGVARSRQAVRLADLALLVVDVSLPVADDDREIVALTEEKRTILTLNKIDLIDADRSIIAARQREYEQIRGKAFDAMVTVSALTGQGLDELGATVARLLLGAPIAADGRLVTNARHRDALARAADHARDALTGFQQGVSPDLLAVDLTAAINAIGEVTGESVGEDLLHAIFSRFCIGK.

Positions 23, 84, and 123 each coordinate (6S)-5-formyl-5,6,7,8-tetrahydrofolate. One can recognise a TrmE-type G domain in the interval 216–383 (GARAALIGRP…LGATVARLLL (168 aa)). N226 is a K(+) binding site. GTP-binding positions include 226–231 (NAGKSS), 245–251 (TPIPGTT), and 270–273 (DTAG). S230 lines the Mg(2+) pocket. K(+)-binding residues include T245, I247, and T250. Residue T251 participates in Mg(2+) binding. K461 is a binding site for (6S)-5-formyl-5,6,7,8-tetrahydrofolate.

The protein belongs to the TRAFAC class TrmE-Era-EngA-EngB-Septin-like GTPase superfamily. TrmE GTPase family. In terms of assembly, homodimer. Heterotetramer of two MnmE and two MnmG subunits. K(+) serves as cofactor.

The protein localises to the cytoplasm. Functionally, exhibits a very high intrinsic GTPase hydrolysis rate. Involved in the addition of a carboxymethylaminomethyl (cmnm) group at the wobble position (U34) of certain tRNAs, forming tRNA-cmnm(5)s(2)U34. This chain is tRNA modification GTPase MnmE, found in Roseiflexus sp. (strain RS-1).